Reading from the N-terminus, the 625-residue chain is Pentatricopeptide repeat-containing protein At2g36980, mitochondrial (625 aa).

A mitochondrion-targeting transit peptide spans 1-7; sequence MSVLVRL. 15 PPR repeats span residues 3–33, 34–68, 69–103, 104–134, 137–167, 168–202, 203–238, 239–269, 270–300, 301–335, 336–370, 371–401, 402–436, 437–471, and 473–503; these read VLVR…MPEL, DTVA…DAKP, DDYS…GFCA, SLPV…MCCD, NEVT…MPKR, VAFA…EFKP, DCYT…GWSS, AVEA…IEVL, TQVS…APEK, NIVT…GVDS, DHFA…GFQG, YAYV…IANK, DLVS…GIKP, DNVT…YRIP, and EVDH…YSSL. A type E motif region spans residues 512 to 587; the sequence is SWETLLGACS…TPGCSWIEVG (76 aa). Residues 588–618 are type E(+) motif; that stretch reads NQVSTFVVGDSSHPRLEELSETLNCLQHEMR.

It belongs to the PPR family. PCMP-E subfamily.

It localises to the mitochondrion. The chain is Pentatricopeptide repeat-containing protein At2g36980, mitochondrial (PCMP-E73) from Arabidopsis thaliana (Mouse-ear cress).